We begin with the raw amino-acid sequence, 97 residues long: DNA-binding protein HU (97 aa).

Belongs to the bacterial histone-like protein family. Has been isolated in complexes with 5S rRNA and bL25, and with 5S rRNA, bL25 and uL5. Homodimer.

Its function is as follows. Histone-like DNA-binding protein which is capable of wrapping DNA to stabilize it, and thus to prevent its denaturation under extreme environmental conditions. This chain is DNA-binding protein HU, found in Thermus thermophilus (strain ATCC 27634 / DSM 579 / HB8).